Reading from the N-terminus, the 109-residue chain is uncharacterized protein (109 aa).

Residues 63–109 (DPSTWEPEEHETEHCRGHTLPEKKQKPQGGHGSDKDEDKGNCGCDHC) form a disordered region. Basic and acidic residues-rich tracts occupy residues 73 to 87 (ETEHCRGHTLPEKKQ) and 94 to 109 (GSDKDEDKGNCGCDHC).

This is an uncharacterized protein from Caenorhabditis elegans.